A 499-amino-acid chain; its full sequence is Circadian clock oscillator protein KaiC (499 aa).

2 KaiC domains span residues 1–243 (MQSS…VSVF) and 257–499 (VRIS…DERA). Residues Gly45, Thr46, Gly47, Lys48, Thr49, Ser85, Lys220, Leu221, Arg222, Thr224, His226, Thr286, Gly287, Thr288, Gly289, Lys290, Thr291, and Leu292 each contribute to the ATP site. Position 49 (Thr49) interacts with Mg(2+). Residue Thr291 coordinates Mg(2+). Glu314 contacts Mg(2+). Trp327 serves as a coordination point for ATP. Ser427 is modified (phosphoserine; by autocatalysis). Thr428 carries the phosphothreonine; by autocatalysis modification. Positions 447, 453, 454, 455, 457, 459, and 461 each coordinate ATP.

Belongs to the KaiC family. In terms of assembly, homohexamer; hexamerization is dependent on ATP-binding. Component of the KaiBC complex. KaiC interacts with SasA, activating its autokinase function and leading to RpaA activation. It depends on Mg(2+) as a cofactor. Post-translationally, phosphorylated on serine and threonine residues by autocatalysis. Has a 4 step phosphorylation cycle; the autokinase acts first on Thr-428, then Ser-427. When Ser-427 is modified KaiC switches to an autophosphatase mode, acting first on phospho-Thr-428 then phospho-Ser-427.

It carries out the reaction L-seryl-[protein] + ATP = O-phospho-L-seryl-[protein] + ADP + H(+). The catalysed reaction is L-threonyl-[protein] + ATP = O-phospho-L-threonyl-[protein] + ADP + H(+). The enzyme catalyses ATP + H2O = ADP + phosphate + H(+). Functionally, central component of the KaiBC oscillator complex, which constitutes the main circadian regulator in cyanobacteria. Its composition changes during the circadian cycle to control KaiC phosphorylation. Autophosphorylates and has a weak ATPase activity; ATPase activity defines the circadian period. The polypeptide is Circadian clock oscillator protein KaiC (Prochlorococcus marinus (strain MIT 9313)).